The chain runs to 206 residues: Glycerol-3-phosphate acyltransferase 1 (206 aa).

5 helical membrane passes run 14–34, 67–87, 91–111, 124–144, and 148–168; these read IALAAAIIGYLFGSIPFGLIL, ATLLLDALKASAAAWVVSYFL, AAIIAGFFAFIGHLFPVWIGF, LLGVAPIMVVLFAAVWLAVAF, and YSSLSALVAMLVIPVALWILG.

The protein belongs to the PlsY family. Probably interacts with PlsX.

The protein localises to the cell inner membrane. It carries out the reaction an acyl phosphate + sn-glycerol 3-phosphate = a 1-acyl-sn-glycero-3-phosphate + phosphate. It participates in lipid metabolism; phospholipid metabolism. Catalyzes the transfer of an acyl group from acyl-phosphate (acyl-PO(4)) to glycerol-3-phosphate (G3P) to form lysophosphatidic acid (LPA). This enzyme utilizes acyl-phosphate as fatty acyl donor, but not acyl-CoA or acyl-ACP. This chain is Glycerol-3-phosphate acyltransferase 1, found in Rhizobium johnstonii (strain DSM 114642 / LMG 32736 / 3841) (Rhizobium leguminosarum bv. viciae).